Here is a 448-residue protein sequence, read N- to C-terminus: Homogentisate 1,2-dioxygenase (448 aa).

H303 (proton acceptor) is an active-site residue. 2 residues coordinate Fe cation: H346 and E352. Homogentisate is bound by residues Y361 and H382. H382 lines the Fe cation pocket.

Belongs to the homogentisate dioxygenase family. Hexamer; dimer of trimers. Fe cation is required as a cofactor.

The catalysed reaction is homogentisate + O2 = 4-maleylacetoacetate + H(+). The protein operates within amino-acid degradation; L-phenylalanine degradation; acetoacetate and fumarate from L-phenylalanine: step 4/6. In terms of biological role, involved in the catabolism of homogentisate (2,5-dihydroxyphenylacetate or 2,5-OH-PhAc), a central intermediate in the degradation of phenylalanine and tyrosine. Catalyzes the oxidative ring cleavage of the aromatic ring of homogentisate to yield maleylacetoacetate. The polypeptide is Homogentisate 1,2-dioxygenase (Rhodopseudomonas palustris (strain BisA53)).